Reading from the N-terminus, the 225-residue chain is Chalcone--flavanone isomerase 3 (225 aa).

The substrate site is built by T51, N116, and T193.

Belongs to the chalcone isomerase family.

It carries out the reaction a chalcone = a flavanone.. It functions in the pathway secondary metabolite biosynthesis; flavonoid biosynthesis. In terms of biological role, catalyzes the intramolecular cyclization of bicyclic chalcones into tricyclic (S)-flavanones. Responsible for the isomerization of 4,2',4',6'-tetrahydroxychalcone (also termed chalcone) into naringenin. The chain is Chalcone--flavanone isomerase 3 (CHI3) from Lotus japonicus (Lotus corniculatus var. japonicus).